A 633-amino-acid polypeptide reads, in one-letter code: Pentatricopeptide repeat-containing protein At3g24000, mitochondrial (633 aa).

The N-terminal 63 residues, Met-1 to Tyr-63, are a transit peptide targeting the mitochondrion. PPR repeat units lie at residues Asp-94–Arg-124, Asp-125–Pro-159, Asn-160–Ser-194, Asn-195–Arg-225, Asn-226–Pro-260, Ser-261–Leu-295, Val-296–Arg-326, Asp-327–Pro-361, Asn-362–Pro-396, and Glu-397–Ala-431. The interval Ile-432–Glu-507 is type E motif. Positions Asn-508–Lys-538 are type E(+) motif. The type DYW motif stretch occupies residues Glu-539–Trp-633.

Belongs to the PPR family. PCMP-H subfamily.

The protein localises to the mitochondrion. This is Pentatricopeptide repeat-containing protein At3g24000, mitochondrial (PCMP-H87) from Arabidopsis thaliana (Mouse-ear cress).